The sequence spans 418 residues: UDP-N-acetylglucosamine 1-carboxyvinyltransferase (418 aa).

22-23 (KN) provides a ligand contact to phosphoenolpyruvate. UDP-N-acetyl-alpha-D-glucosamine is bound at residue Arg-93. Catalysis depends on Cys-117, which acts as the Proton donor. 2-(S-cysteinyl)pyruvic acid O-phosphothioketal is present on Cys-117. UDP-N-acetyl-alpha-D-glucosamine-binding residues include Asp-305 and Val-327.

It belongs to the EPSP synthase family. MurA subfamily.

The protein resides in the cytoplasm. The enzyme catalyses phosphoenolpyruvate + UDP-N-acetyl-alpha-D-glucosamine = UDP-N-acetyl-3-O-(1-carboxyvinyl)-alpha-D-glucosamine + phosphate. It functions in the pathway cell wall biogenesis; peptidoglycan biosynthesis. In terms of biological role, cell wall formation. Adds enolpyruvyl to UDP-N-acetylglucosamine. The polypeptide is UDP-N-acetylglucosamine 1-carboxyvinyltransferase (Halorhodospira halophila (strain DSM 244 / SL1) (Ectothiorhodospira halophila (strain DSM 244 / SL1))).